We begin with the raw amino-acid sequence, 364 residues long: Aromatic prenyltransferase (364 aa).

The signal sequence occupies residues 1–22 (MDRNQWTLALMALMRFAHRAFI). N-linked (GlcNAc...) asparagine glycans are attached at residues asparagine 142 and asparagine 337.

The protein belongs to the aromatic prenyltransferase family.

Prenyltransferase that attaches isoprenoid moieties to carbon atoms of aromatic substrates in an enzyme-catalyzed Friedel-Crafts reaction. The sequence is that of Aromatic prenyltransferase from Talaromyces marneffei (strain ATCC 18224 / CBS 334.59 / QM 7333) (Penicillium marneffei).